The primary structure comprises 79 residues: UPF0349 protein BCE33L4669 (79 aa).

This sequence belongs to the UPF0349 family.

The polypeptide is UPF0349 protein BCE33L4669 (Bacillus cereus (strain ZK / E33L)).